A 245-amino-acid chain; its full sequence is MKKILAEIAYDGSLYYGFQIQPTKPTIQGEIEKALEKISKTKVKVHSAGRTDKGVHARGQIISFYIRINIKLKNLKTAINSLLRKDIRIIKLKYVADEFQPRFNAKRRKYSYYILNNENHYPWEGYQAYYVKKKLNINRLNEMAKMLIGIHDFTTFSCIKDQTNSKLKKIYFARFKKKNKLIIFEIIGSSFLWKMVRSIVGTIIDIEIKNEPVYTFKKILNSKNRKFTRTTAPAKALFLDKVFYE.

D52 acts as the Nucleophile in catalysis. Y110 contributes to the substrate binding site.

It belongs to the tRNA pseudouridine synthase TruA family. Homodimer.

It carries out the reaction uridine(38/39/40) in tRNA = pseudouridine(38/39/40) in tRNA. Formation of pseudouridine at positions 38, 39 and 40 in the anticodon stem and loop of transfer RNAs. The protein is tRNA pseudouridine synthase A of Borrelia hermsii (strain HS1 / DAH).